Reading from the N-terminus, the 412-residue chain is Divalent metal cation transporter MntH (412 aa).

Helical transmembrane passes span 19 to 39 (LALM…GNFA), 46 to 66 (ASFG…AMLI), 94 to 114 (VWFY…AEFI), 122 to 142 (LILG…TFLI), 156 to 176 (VIGG…IFSQ), 196 to 216 (AVFL…IYLH), 241 to 261 (IAMT…AAAF), 290 to 310 (VFGL…TLAG), 329 to 349 (TITM…TRIL), 350 to 370 (VMSQ…LLIF), and 389 to 409 (IGWM…VGTA).

It belongs to the NRAMP family.

The protein resides in the cell inner membrane. H(+)-stimulated, divalent metal cation uptake system. In Citrobacter koseri (strain ATCC BAA-895 / CDC 4225-83 / SGSC4696), this protein is Divalent metal cation transporter MntH.